The following is a 109-amino-acid chain: Prefoldin subunit 1 (109 aa).

An N-acetylserine modification is found at S2.

This sequence belongs to the prefoldin subunit beta family. In terms of assembly, heterohexamer of two PFD-alpha type and four PFD-beta type subunits.

It is found in the cytoplasm. In terms of biological role, binds specifically to cytosolic chaperonin (c-CPN) and transfers target proteins to it. Binds to nascent polypeptide chain and promotes folding in an environment in which there are many competing pathways for nonnative proteins. The protein is Prefoldin subunit 1 (PFD1) of Saccharomyces cerevisiae (strain ATCC 204508 / S288c) (Baker's yeast).